A 652-amino-acid polypeptide reads, in one-letter code: DNA ligase (652 aa).

Residues 29–33 (DSDYD), 78–79 (SL), and Glu107 each bind NAD(+). The active-site N6-AMP-lysine intermediate is the Lys109. The NAD(+) site is built by Arg130, Glu164, Lys278, and Lys302. Positions 395, 398, 413, and 418 each coordinate Zn(2+). The BRCT domain occupies 577-652 (NSDAALFGLT…IEDEDWLRQL (76 aa)).

This sequence belongs to the NAD-dependent DNA ligase family. LigA subfamily. Mg(2+) serves as cofactor. It depends on Mn(2+) as a cofactor.

It carries out the reaction NAD(+) + (deoxyribonucleotide)n-3'-hydroxyl + 5'-phospho-(deoxyribonucleotide)m = (deoxyribonucleotide)n+m + AMP + beta-nicotinamide D-nucleotide.. In terms of biological role, DNA ligase that catalyzes the formation of phosphodiester linkages between 5'-phosphoryl and 3'-hydroxyl groups in double-stranded DNA using NAD as a coenzyme and as the energy source for the reaction. It is essential for DNA replication and repair of damaged DNA. The sequence is that of DNA ligase from Streptococcus pyogenes serotype M3 (strain ATCC BAA-595 / MGAS315).